A 114-amino-acid chain; its full sequence is Snake venom vascular endothelial growth factor (114 aa).

Gln1 is modified (pyrrolidone carboxylic acid). 3 disulfides stabilise this stretch: Cys14-Cys56, Cys45-Cys91, and Cys49-Cys93. Positions 92–114 (ECRPGSTVNNGKRKKNPKEGEPR) are disordered.

This sequence belongs to the PDGF/VEGF growth factor family. Snake venom VEGF subfamily. As to quaternary structure, homodimer; disulfide-linked. Interacts with human VEGF receptor 1/FLT1. Interacts with human VEGF receptor 2/KDR. As to expression, expressed by venom gland.

Its subcellular location is the secreted. Snake venom vascular endothelial growth factor (svVEGF) that may contribute to venom dispersion and prey subjugation by inducing vascular permeability and hypotension. Induces an increase in capillary permeability after intradermal injection, as well as a drastic hypotensive effect after intravenous injection. The hypotension is mediated by nitric oxide (NO), which is produced by VEGF-activated endothelium NO synthase. Induces angiogenesis and migration of human vascular endothelial cells in vitro. Exhibits angiogenic activity by inducing human umbilical vein endothelial cells (HUVEC) to develop vessels in vitro. Induces cellular migration of HUVEC cells towards a wound in scratch assays, enhancing wound closure after 12 h by 49.5%. Induces dose-dependent leukocyte recruitment to the peritoneal cavity leading to increased vascular permeability in mice. This chain is Snake venom vascular endothelial growth factor, found in Crotalus durissus terrificus (South American rattlesnake).